The chain runs to 105 residues: Large ribosomal subunit protein uL24 (105 aa).

Belongs to the universal ribosomal protein uL24 family. In terms of assembly, part of the 50S ribosomal subunit.

Functionally, one of two assembly initiator proteins, it binds directly to the 5'-end of the 23S rRNA, where it nucleates assembly of the 50S subunit. In terms of biological role, one of the proteins that surrounds the polypeptide exit tunnel on the outside of the subunit. The polypeptide is Large ribosomal subunit protein uL24 (Parvibaculum lavamentivorans (strain DS-1 / DSM 13023 / NCIMB 13966)).